A 414-amino-acid polypeptide reads, in one-letter code: Serine/threonine transporter SstT (414 aa).

Residues 2 to 15 (TTQRSPGLFRRLAH) are Cytoplasmic-facing. The chain crosses the membrane as a helical span at residues 16-36 (GSLVKQILVGLVLGILLAWIS). Topologically, residues 37 to 45 (KPAAEAVGL) are periplasmic. The chain crosses the membrane as a helical span at residues 46 to 66 (LGTLFVGALKAVAPILVLMLV). The Cytoplasmic portion of the chain corresponds to 67 to 83 (MASIANHQHGQKTNIRP). A helical transmembrane segment spans residues 84 to 104 (ILFLYLLGTFSAALAAVVFSF). Over 105-142 (AFPSTLHLSSSAGDISPPSGIVEVMRGLVMSMVSNPID) the chain is Periplasmic. A helical transmembrane segment spans residues 143-163 (ALLKGNYIGILVWAIGLGFAL). The Cytoplasmic segment spans residues 164–179 (RHGNETTKNLVNDMSN). Residues 180-200 (AVTFMVKLVIRFAPIGIFGLV) form a helical membrane-spanning segment. The Periplasmic segment spans residues 201–217 (SSTLATTGFSTLWGYAQ). Residues 218–238 (LLVVLVGCMLLVALVVNPLLV) traverse the membrane as a helical segment. Topologically, residues 239-299 (WWKIRRNPFP…VSIPLGATIN (61 aa)) are cytoplasmic. The chain crosses the membrane as a helical span at residues 300–320 (MAGAAITITVLTLAAVNTLGI). Over 321-331 (PVDLPTALLLS) the chain is Periplasmic. The chain crosses the membrane as a helical span at residues 332–352 (VVASLCACGASGVAGGSLLLI). Residues 353–414 (PLACNMFGIS…DRLANSALRN (62 aa)) lie on the Cytoplasmic side of the membrane.

It belongs to the dicarboxylate/amino acid:cation symporter (DAACS) (TC 2.A.23) family.

It localises to the cell inner membrane. It catalyses the reaction L-serine(in) + Na(+)(in) = L-serine(out) + Na(+)(out). The enzyme catalyses L-threonine(in) + Na(+)(in) = L-threonine(out) + Na(+)(out). Functionally, involved in the import of serine and threonine into the cell, with the concomitant import of sodium (symport system). The sequence is that of Serine/threonine transporter SstT from Shigella flexneri serotype 5b (strain 8401).